We begin with the raw amino-acid sequence, 366 residues long: Chorismate synthase (366 aa).

Positions 48 and 54 each coordinate NADP(+). FMN-binding positions include 125 to 127, 238 to 239, glycine 278, 293 to 297, and arginine 319; these read RSS, NA, and KPTSS.

This sequence belongs to the chorismate synthase family. As to quaternary structure, homotetramer. Requires FMNH2 as cofactor.

It catalyses the reaction 5-O-(1-carboxyvinyl)-3-phosphoshikimate = chorismate + phosphate. Its pathway is metabolic intermediate biosynthesis; chorismate biosynthesis; chorismate from D-erythrose 4-phosphate and phosphoenolpyruvate: step 7/7. Functionally, catalyzes the anti-1,4-elimination of the C-3 phosphate and the C-6 proR hydrogen from 5-enolpyruvylshikimate-3-phosphate (EPSP) to yield chorismate, which is the branch point compound that serves as the starting substrate for the three terminal pathways of aromatic amino acid biosynthesis. This reaction introduces a second double bond into the aromatic ring system. The protein is Chorismate synthase of Herminiimonas arsenicoxydans.